Reading from the N-terminus, the 354-residue chain is MGRLLALSLLGIALALLGERLLALRNRLKASREVESVDLPNCHLIKGIEAGAEDIDILPNGLAFFSVGLKCPGLHSFAPDKPGGILMMDLNEENPRALELRVSRGFNLASFNPHGISTFIDSDDTVYLFVVNHPEFKNTVEIFKFEEEENSLLHLKTIKHELLPSVNDIIAVGPEHFYATNDHYFSDPFLKYLETYLNLHWTNVVYYSPNEVKVVAEGFDSANGINISPDKKYIYVADILAHEIHVLEKHPNMNLTQLKVLKLDTLVDNLSIDPSSGDVLVGCHPNGQKLFVYDPKNPPSSEVLRIQNILSEKPTVTTVYANNGSVLQGSSVASVYDKKLLIGTLYHRALYCEL.

A disulfide bond links C42 and C352. E53 and D54 together coordinate Ca(2+). Residue H114 is the Proton acceptor of the active site. Ca(2+) is bound by residues I116, N167, D168, and N223. N254 is a glycosylation site (N-linked (GlcNAc...) asparagine). Residues D268 and N269 each coordinate Ca(2+). 2 N-linked (GlcNAc...) asparagine glycosylation sites follow: N269 and N323.

The protein belongs to the paraoxonase family. As to quaternary structure, homotrimer. Ca(2+) serves as cofactor. In terms of processing, glycosylated. Post-translationally, the signal sequence is not cleaved.

The protein resides in the membrane. It carries out the reaction a phenyl acetate + H2O = a phenol + acetate + H(+). It catalyses the reaction an N-acyl-L-homoserine lactone + H2O = an N-acyl-L-homoserine + H(+). Its function is as follows. Capable of hydrolyzing lactones and a number of aromatic carboxylic acid esters. The sequence is that of Serum paraoxonase/arylesterase 2 (PON2) from Bos taurus (Bovine).